A 341-amino-acid chain; its full sequence is Zinc transporter ZIP11 (341 aa).

Transmembrane regions (helical) follow at residues 12-32 (LLGTFFTWGLTAAGAALVFVF), 44-64 (LGFAAGVMLAASYWSLLAPAV), 72-92 (GFGSLAFLPVAIGFTLGAAFV), 193-213 (IALLILAITIHNIPEGLAVGV), 262-284 (FWYGQLSGMVEPLAGVFGAFAVV), 289-306 (ILPYALAFAAGAMVYVIM), and 321-341 (LASWASILGFVVMMSLDVGLG).

The protein belongs to the ZIP transporter (TC 2.A.5) family.

Its subcellular location is the cell membrane. The protein resides in the nucleus. The protein localises to the cytoplasm. It is found in the golgi apparatus. It carries out the reaction Zn(2+)(in) = Zn(2+)(out). The catalysed reaction is Cu(2+)(in) = Cu(2+)(out). Zinc importer that regulates cytosolic zinc concentrations either via zinc influx from the extracellular compartment or efflux from intracellular organelles such as Golgi apparatus. May transport copper ions as well. The transport mechanism remains to be elucidated. The protein is Zinc transporter ZIP11 (SLC39A11) of Bos taurus (Bovine).